The following is a 500-amino-acid chain: Aspartyl/glutamyl-tRNA(Asn/Gln) amidotransferase subunit B (500 aa).

It belongs to the GatB/GatE family. GatB subfamily. In terms of assembly, heterotrimer of A, B and C subunits.

It carries out the reaction L-glutamyl-tRNA(Gln) + L-glutamine + ATP + H2O = L-glutaminyl-tRNA(Gln) + L-glutamate + ADP + phosphate + H(+). The catalysed reaction is L-aspartyl-tRNA(Asn) + L-glutamine + ATP + H2O = L-asparaginyl-tRNA(Asn) + L-glutamate + ADP + phosphate + 2 H(+). Allows the formation of correctly charged Asn-tRNA(Asn) or Gln-tRNA(Gln) through the transamidation of misacylated Asp-tRNA(Asn) or Glu-tRNA(Gln) in organisms which lack either or both of asparaginyl-tRNA or glutaminyl-tRNA synthetases. The reaction takes place in the presence of glutamine and ATP through an activated phospho-Asp-tRNA(Asn) or phospho-Glu-tRNA(Gln). The protein is Aspartyl/glutamyl-tRNA(Asn/Gln) amidotransferase subunit B of Rhizobium meliloti (strain 1021) (Ensifer meliloti).